The sequence spans 112 residues: Cytochrome c type-1 (112 aa).

4 residues coordinate heme c: Cys20, Cys23, His24, and Met85.

Post-translationally, binds 1 heme c group covalently per subunit.

It is found in the mitochondrion intermembrane space. Functionally, electron carrier between complex III (ubiquinol-cytochrome c oxireductase) and complex IV (cytochrome c oxidase). In Ascaris suum (Pig roundworm), this protein is Cytochrome c type-1.